The primary structure comprises 163 residues: Inorganic pyrophosphatase (163 aa).

Glu-8 is a Mg(2+) binding site. Substrate is bound by residues Lys-16, Arg-30, and Tyr-42. The Mg(2+) site is built by Asp-52, Asp-57, Asp-84, and Asp-89. The Proton acceptor role is filled by Asp-89. Tyr-126 serves as a coordination point for substrate.

The protein belongs to the PPase family. In terms of assembly, homohexamer. It depends on Mg(2+) as a cofactor.

The protein localises to the cytoplasm. It catalyses the reaction diphosphate + H2O = 2 phosphate + H(+). Functionally, catalyzes the hydrolysis of inorganic pyrophosphate (PPi) forming two phosphate ions. The polypeptide is Inorganic pyrophosphatase (Streptomyces coelicolor (strain ATCC BAA-471 / A3(2) / M145)).